Reading from the N-terminus, the 72-residue chain is UPF0270 protein YheU (72 aa).

Belongs to the UPF0270 family.

The protein is UPF0270 protein YheU of Shigella flexneri serotype 5b (strain 8401).